The chain runs to 254 residues: tRNA pseudouridine synthase A (254 aa).

D52 (nucleophile) is an active-site residue. A substrate-binding site is contributed by Y110.

Belongs to the tRNA pseudouridine synthase TruA family. In terms of assembly, homodimer.

It catalyses the reaction uridine(38/39/40) in tRNA = pseudouridine(38/39/40) in tRNA. In terms of biological role, formation of pseudouridine at positions 38, 39 and 40 in the anticodon stem and loop of transfer RNAs. The protein is tRNA pseudouridine synthase A of Thermodesulfovibrio yellowstonii (strain ATCC 51303 / DSM 11347 / YP87).